The following is a 475-amino-acid chain: Putative F-box protein At1g46840 (475 aa).

The F-box domain occupies 25-71 (TYVLEKLHIDLVIEILSRLSAKSIAICRCVSKQWNSLLVSQDFVESF). Residues 423–433 (SSYSTTRSYKS) show a composition bias toward low complexity. Positions 423–475 (SSYSTTRSYKSSGKRCSDRSIGEDEQDDIGEKRGDQAAERRERSTKRGKHEVH) are disordered. Over residues 451 to 464 (IGEKRGDQAAERRE) the composition is skewed to basic and acidic residues. The segment covering 465–475 (RSTKRGKHEVH) has biased composition (basic residues).

This chain is Putative F-box protein At1g46840, found in Arabidopsis thaliana (Mouse-ear cress).